The following is a 115-amino-acid chain: Beta-2-microglobulin (115 aa).

Residues 1–16 (MKIALVLLSLLALTLA) form the signal peptide. The Ig-like C1-type domain maps to 22 to 113 (PPVVKVYTAE…GNPSKKYRLD (92 aa)).

This sequence belongs to the beta-2-microglobulin family. As to quaternary structure, heterodimer of an alpha chain and a beta chain. Beta-2-microglobulin is the beta-chain of major histocompatibility complex class I molecules.

It localises to the secreted. Component of the class I major histocompatibility complex (MHC). Involved in the presentation of peptide antigens to the immune system. The sequence is that of Beta-2-microglobulin (b2m) from Xenopus laevis (African clawed frog).